The sequence spans 170 residues: ATP synthase subunit b (170 aa).

A helical membrane pass occupies residues 30 to 50 (FFFVLAIFLVVLAVIGTFVVP).

It belongs to the ATPase B chain family. In terms of assembly, F-type ATPases have 2 components, F(1) - the catalytic core - and F(0) - the membrane proton channel. F(1) has five subunits: alpha(3), beta(3), gamma(1), delta(1), epsilon(1). F(0) has three main subunits: a(1), b(2) and c(10-14). The alpha and beta chains form an alternating ring which encloses part of the gamma chain. F(1) is attached to F(0) by a central stalk formed by the gamma and epsilon chains, while a peripheral stalk is formed by the delta and b chains.

The protein localises to the cell membrane. Functionally, f(1)F(0) ATP synthase produces ATP from ADP in the presence of a proton or sodium gradient. F-type ATPases consist of two structural domains, F(1) containing the extramembraneous catalytic core and F(0) containing the membrane proton channel, linked together by a central stalk and a peripheral stalk. During catalysis, ATP synthesis in the catalytic domain of F(1) is coupled via a rotary mechanism of the central stalk subunits to proton translocation. Component of the F(0) channel, it forms part of the peripheral stalk, linking F(1) to F(0). This is ATP synthase subunit b from Mycobacterium ulcerans (strain Agy99).